The following is a 352-amino-acid chain: Replication-associated protein (352 aa).

Positions 9–117 constitute a CRESS-DNA virus Rep endonuclease domain; that stretch reads QINAKNYFLT…DGDTLVWGEF (109 aa). Residues 16-19 carry the RCR-1 motif; sequence FLTY. Residues E50, H58, and H60 each contribute to the a divalent metal cation site. The short motif at 58 to 60 is the RCR-2 element; it reads HLH. Residue Y104 is the For DNA cleavage activity of the active site. The RCR-3 signature appears at 104 to 107; sequence YIDK. D108 serves as a coordination point for a divalent metal cation. Positions 144–154 are binding to RBR1; it reads KEEALQIIREK. Residues 157–177 are oligomerization; sequence EKYLFQFHNLNSNLDRIFDKT. 223-230 is an ATP binding site; the sequence is GDSRTGKT.

Belongs to the geminiviridae Rep protein family. As to quaternary structure, homooligomer. Interacts with the replication enhancer protein (REn). Interacts with host retinoblastoma-related protein 1 (RBR1), and may thereby induce the transcription of host replicative enzymes even if the cell is not dividing anymore. Interacts with host PCNA. Interacts with host SCE1 protein. Interacts with host GRIK1, GRIK2, GRIMP and histone H3. It depends on Mg(2+) as a cofactor. Mn(2+) is required as a cofactor.

The protein resides in the host nucleus. Its function is as follows. Essential for the replication of viral ssDNA. The closed circular ssDNA genome is first converted to a superhelical dsDNA. Rep binds a specific region at the genome origin of replication. It introduces an endonucleolytic nick within the conserved sequence 5'-TAATATTAC-3' in the intergenic region of the genome present in all geminiviruses, thereby initiating the rolling circle replication (RCR). Following cleavage, binds covalently to the 5'-phosphate of DNA as a tyrosyl ester. The cleavage gives rise to a free 3'-OH that serves as a primer for the cellular DNA polymerase. The polymerase synthesizes the (+) strand DNA by rolling circle mechanism. After one round of replication, a Rep-catalyzed nucleotidyl transfer reaction releases a circular single-stranded virus genome, thereby terminating the replication. Displays origin-specific DNA cleavage, nucleotidyl transferase, ATPase and helicase activities. In Solanum lycopersicum (Tomato), this protein is Replication-associated protein.